Here is a 333-residue protein sequence, read N- to C-terminus: Gap junction alpha-4 protein (333 aa).

The Cytoplasmic segment spans residues 1–20 (MGDWGFLEKLLDQVQEHSTV). The helical transmembrane segment at 21–40 (VGKIWLTVLFIFRILILGLA) threads the bilayer. The Extracellular segment spans residues 41-76 (GESVWGDEQSDFECNTAQPGCTNVCYDQAFPISHIR). Residues 77 to 99 (YWVLQFLFVSTPTLVYLGHVIYL) form a helical membrane-spanning segment. The Cytoplasmic segment spans residues 100–148 (SRREERLRQKEGELRALPAKDPRVERALASIERQMAKISVAEDGHLRIR). The helical transmembrane segment at 149–165 (GALMGTYVASVLCKSVL) threads the bilayer. Residues 166-207 (EAGFLYGQWRLYGWTMEPVFVCQRSPCPYLVDCFVSRPTEKT) are Extracellular-facing. The helical transmembrane segment at 208–230 (IFIIFMLVVGLISLVLNLLELAY) threads the bilayer. Topologically, residues 231–333 (LLCRCLSRGV…SSSASKKQYV (103 aa)) are cytoplasmic. Residues 303–333 (SRAPLFLDPPPQTGRKSPSRPSSSASKKQYV) form a disordered region. Residues 317–333 (RKSPSRPSSSASKKQYV) show a composition bias toward low complexity.

Belongs to the connexin family. Alpha-type (group II) subfamily. In terms of assembly, a connexon is composed of a hexamer of connexins.

It localises to the cell membrane. It is found in the cell junction. The protein localises to the gap junction. One gap junction consists of a cluster of closely packed pairs of transmembrane channels, the connexons, through which materials of low MW diffuse from one cell to a neighboring cell. The polypeptide is Gap junction alpha-4 protein (GJA4) (Bos taurus (Bovine)).